The primary structure comprises 459 residues: uncharacterized protein (459 aa).

The region spanning 9 to 67 is the TRAM domain; the sequence is KLEVGQTFPVTIKRLGINGEGVGYFKRQVVFIPGALPGEEVVAETTKIQRGFAEAKVKK. [4Fe-4S] cluster-binding residues include cysteine 80, cysteine 86, cysteine 89, and cysteine 168. Residues glutamine 292, tyrosine 321, aspartate 342, and aspartate 390 each contribute to the S-adenosyl-L-methionine site. Cysteine 417 serves as the catalytic Nucleophile.

This sequence belongs to the class I-like SAM-binding methyltransferase superfamily. RNA M5U methyltransferase family.

This is an uncharacterized protein from Bacillus anthracis.